The chain runs to 593 residues: MEKEKKVKYFLRKSAFGLASVSAAFLVGSTVFAVDSPIEDTPIIRNGGELTNLLGNSETTLALRNEESATADLTAAAVADTVAAAAAENAGAAAWEAAAAADALAKAKADALKEFNKYGVSDYYKNLINNAKTVEGVKDLQAQVVESAKKARISEATDGLSDFLKSQTPAEDTVKSIELAEAKVLANRELDKYGVSDYHKNLINNAKTVEGVKDLQAQVVESAKKARISEATDGLSDFLKSQTPAEDTVKSIELAEAKVLANRELDKYGVSDYYKNLINNAKTVEGVKALIDEILAALPKTDTYKLILNGKTLKGETTTEAVDAATAEKVFKQYANDNGVDGEWTYDDATKTFTVTEKPEVIDASELTPAVTTYKLVINGKTLKGETTTEAVDAATAEKVFKQYANDNGVDGEWTYDDATKTFTVTEKPEVIDASELTPAVTTYKLVINGKTLKGETTTKAVDAETAEKAFKQYANDNGVDGVWTYDDATKTFTVTEMVTEVPGDAPTEPEKPEASIPLVPLTPATPIAKDDAKKDDTKKEDAKKPEAKKEDAKKAETLPTTGEGSNPFFTAAALAVMAGAGALAVASKRKED.

The signal sequence occupies residues 1 to 33 (MEKEKKVKYFLRKSAFGLASVSAAFLVGSTVFA). 5 tandem repeats follow at residues 104 to 140 (LAKAKADALKEFNKYGVSDYYKNLINNAKTVEGVKDL), 179 to 215 (LAEAKVLANRELDKYGVSDYHKNLINNAKTVEGVKDL), 254 to 290 (LAEAKVLANRELDKYGVSDYYKNLINNAKTVEGVKAL), 303 to 357 (TYKL…TVTE), and 373 to 427 (TYKL…TVTE). Residues 104 to 290 (LAKAKADALK…AKTVEGVKAL (187 aa)) are 3 X 37 AA repeats. The segment at 303–427 (TYKLILNGKT…DATKTFTVTE (125 aa)) is 2 X 55 AA repeats. A disordered region spans residues 503 to 567 (PGDAPTEPEK…TLPTTGEGSN (65 aa)). Over residues 529 to 557 (AKDDAKKDDTKKEDAKKPEAKKEDAKKAE) the composition is skewed to basic and acidic residues. The segment at 531–555 (DDAKKDDTKKEDAKKPEAKKEDAKK) is 5 X 5 AA repeats of [DE]-D-A-K-K. Positions 559–563 (LPTTG) match the LPXTG sorting signal motif. Thr562 carries the post-translational modification Pentaglycyl murein peptidoglycan amidated threonine. The propeptide at 563-593 (GEGSNPFFTAAALAVMAGAGALAVASKRKED) is removed by sortase.

Its subcellular location is the secreted. The protein resides in the cell wall. The protein is Immunoglobulin G-binding protein G (spg) of Streptococcus sp. group G.